The chain runs to 164 residues: Transcription elongation factor GreA (164 aa).

This sequence belongs to the GreA/GreB family.

Functionally, necessary for efficient RNA polymerase transcription elongation past template-encoded arresting sites. The arresting sites in DNA have the property of trapping a certain fraction of elongating RNA polymerases that pass through, resulting in locked ternary complexes. Cleavage of the nascent transcript by cleavage factors such as GreA or GreB allows the resumption of elongation from the new 3'terminus. GreA releases sequences of 2 to 3 nucleotides. In Helicobacter pylori (strain P12), this protein is Transcription elongation factor GreA.